The following is a 1174-amino-acid chain: Tyrosine-protein phosphatase non-receptor type 21 (1174 aa).

An FERM domain is found at 23–308 (LVARIQLLNN…ARHKFYRLNQ (286 aa)). Over residues 396–423 (SAHSTNSLNNPQPYLQPSPMSSNPSITG) the composition is skewed to polar residues. Residues 396-445 (SAHSTNSLNNPQPYLQPSPMSSNPSITGSDVMRPDYLPSHRHSAVIPPSY) are disordered. S577, S589, S590, S637, and S673 each carry phosphoserine. Positions 673 to 692 (SQPSVFTERTQREGPEEAEG) are disordered. Residues 681-692 (RTQREGPEEAEG) show a composition bias toward basic and acidic residues. S710 and S711 each carry phosphoserine. 2 disordered regions span residues 711 to 745 (SEEE…DPPG) and 769 to 806 (KRMM…TSGR). Acidic residues predominate over residues 712 to 722 (EEEEDEDFEEE). The span at 796–805 (MSESDLTTSG) shows a compositional bias: polar residues. A phosphoserine mark is found at S797, S799, and S804. A Tyrosine-protein phosphatase domain is found at 896–1167 (VFTEYERILK…TFVYRVLIQF (272 aa)). Substrate contacts are provided by residues E1067, 1108-1114 (CSAGVGR), and Q1152. C1108 serves as the catalytic Phosphocysteine intermediate.

The protein belongs to the protein-tyrosine phosphatase family. Non-receptor class subfamily.

It is found in the cytoplasm. It localises to the cytoskeleton. The enzyme catalyses O-phospho-L-tyrosyl-[protein] + H2O = L-tyrosyl-[protein] + phosphate. The sequence is that of Tyrosine-protein phosphatase non-receptor type 21 (PTPN21) from Homo sapiens (Human).